Consider the following 347-residue polypeptide: Beta-hexosaminidase (347 aa).

Substrate is bound by residues aspartate 62, arginine 70, arginine 134, and 164–165 (KH). Histidine 177 functions as the Proton donor/acceptor in the catalytic mechanism. The active-site Nucleophile is the aspartate 249.

This sequence belongs to the glycosyl hydrolase 3 family. NagZ subfamily.

The protein resides in the cytoplasm. The catalysed reaction is Hydrolysis of terminal non-reducing N-acetyl-D-hexosamine residues in N-acetyl-beta-D-hexosaminides.. It functions in the pathway cell wall biogenesis; peptidoglycan recycling. Its function is as follows. Plays a role in peptidoglycan recycling by cleaving the terminal beta-1,4-linked N-acetylglucosamine (GlcNAc) from peptide-linked peptidoglycan fragments, giving rise to free GlcNAc, anhydro-N-acetylmuramic acid and anhydro-N-acetylmuramic acid-linked peptides. This Mannheimia succiniciproducens (strain KCTC 0769BP / MBEL55E) protein is Beta-hexosaminidase.